A 139-amino-acid chain; its full sequence is Holo-[acyl-carrier-protein] synthase (139 aa).

Mg(2+) is bound by residues aspartate 8 and glutamate 61.

Belongs to the P-Pant transferase superfamily. AcpS family. Requires Mg(2+) as cofactor.

It is found in the cytoplasm. The enzyme catalyses apo-[ACP] + CoA = holo-[ACP] + adenosine 3',5'-bisphosphate + H(+). Functionally, transfers the 4'-phosphopantetheine moiety from coenzyme A to a Ser of acyl-carrier-protein. In Bradyrhizobium sp. (strain BTAi1 / ATCC BAA-1182), this protein is Holo-[acyl-carrier-protein] synthase.